Reading from the N-terminus, the 638-residue chain is Golgin subfamily A member 8S (638 aa).

A compositionally biased stretch (pro residues) spans Met1 to Pro11. Residues Met1–Leu84 are disordered. Over residues Thr50–Gly62 the composition is skewed to polar residues. Coiled coils occupy residues Val105–Asp160, Leu223–Glu275, and Glu318–Gln417. Disordered regions lie at residues Ala427–Pro453, Lys510–Ala532, and Ala556–Ala575. Positions Gly434 to Pro446 are enriched in basic and acidic residues. The segment covering Leu514–Gly525 has biased composition (gly residues). The span at Asp561–Gly574 shows a compositional bias: low complexity.

Belongs to the GOLGA8 family.

This chain is Golgin subfamily A member 8S, found in Homo sapiens (Human).